Here is a 513-residue protein sequence, read N- to C-terminus: Pleiotropic regulator 1 (513 aa).

Position 1 is an N-acetylmethionine (M1). Residues 60–79 (TSKENLKEKGPQNATDSYPH) form a disordered region. Position 119 is a phosphoserine (S119). Residues 136-160 (VDANRTGPAGSEYRHPGASDRSQPT) form a disordered region. Phosphoserine is present on S200. 7 WD repeats span residues 201 to 240 (GHLG…LKLS), 243 to 282 (GHIS…VIRH), 285 to 324 (GHLS…SVHT), 327 to 366 (GHTN…TRVT), 369 to 409 (NHKK…QNLS), 410 to 448 (GHNA…NFQR), and 459 to 498 (DSES…TEET). The residue at position 390 (S390) is a Phosphoserine.

Belongs to the WD repeat PRL1/PRL2 family. Identified in the spliceosome C complex. Component of the PRP19-CDC5L splicing complex composed of a core complex comprising a homotetramer of PRPF19, CDC5L, PLRG1 and BCAS2, and at least three less stably associated proteins CTNNBL1, CWC15 and HSPA8. Interacts (via its WD40 repeat domain) directly with CDC5L (via its C-terminal); the interaction is required for mRNA splicing but not for spliceosome assembly. Component of the minor spliceosome, which splices U12-type introns. Within this complex, interacts with CRIPT. Also interacts directly in the complex with BCAS2 and PRPF19. Interacts with USB1.

The protein resides in the nucleus. The protein localises to the nucleus speckle. In terms of biological role, involved in pre-mRNA splicing as component of the spliceosome. Component of the PRP19-CDC5L complex that forms an integral part of the spliceosome and is required for activating pre-mRNA splicing. As a component of the minor spliceosome, involved in the splicing of U12-type introns in pre-mRNAs. The sequence is that of Pleiotropic regulator 1 (Plrg1) from Mus musculus (Mouse).